We begin with the raw amino-acid sequence, 613 residues long: Nuclear receptor subfamily 1 group D member 1 (613 aa).

The span at 1–48 shows a compositional bias: polar residues; the sequence is MTTLDSNNNTGGVITYIGSSGSSPNRTSPESLYSDSSNGSFQSLTQGC. The segment at 1–70 is required for phosphorylation by CSNK1E and cytoplasmic localization; that stretch reads MTTLDSNNNT…TQDPARSFGS (70 aa). Residues 1 to 102 form a disordered region; that stretch reads MTTLDSNNNT…SSFYNGSPPG (102 aa). A modulating region spans residues 1 to 129; sequence MTTLDSNNNT…TSNITKLNGM (129 aa). Residues 49-285 form a crucial for activation of GJA1 region; the sequence is PTYFPPSPTG…PPRSPSPEPT (237 aa). Residues S55 and S59 each carry the phosphoserine; by GSK3-beta modification. A compositionally biased stretch (low complexity) spans 69-102; that stretch reads GSIPPSLGDDGSPSSSSSSSSSSSSSFYNGSPPG. Positions 130 to 206 form a DNA-binding region, nuclear receptor; the sequence is VLLCKVCGDV…VGMSRDAVRF (77 aa). NR C4-type zinc fingers lie at residues 133–153 and 170–194; these read CKVC…CEGC and CLKN…FKKC. N6-acetyllysine; by KAT5 is present on residues K192 and K193. The segment at 233–286 is disordered; that stretch reads SSQCPLETPPTQHPTPGPMGPSPPPAPAPSPLVGFSQFPQQLTPPRSPSPEPTV. Positions 239–262 are enriched in pro residues; it reads ETPPTQHPTPGPMGPSPPPAPAPS. At T275 the chain carries Phosphothreonine; by CDK1. The region spanning 285-613 is the NR LBD domain; sequence TVEDVISQVA…KLLSFRVDAQ (329 aa). Position 417 (C417) interacts with heme. K590 carries the N6-acetyllysine modification. Residue H601 participates in heme binding.

The protein belongs to the nuclear hormone receptor family. NR1 subfamily. In terms of assembly, binds DNA as a monomer or a homodimer. Interacts with C1D, SP1 and ZNHIT1. Interacts with OPHN1 (via C-terminus). Interacts with PER2; the interaction associates PER2 to BMAL1 promoter region. Interacts with CRY1. Interacts with CCAR2. Interacts with NR2E3. Interacts with SIAH2. Interacts with FBXW7 and CDK1. Interacts with HUWE1. Interacts with NR0B2. Interacts with NFIL3. Interacts (via domain NR LBD) with HSP90AA1 and HSP90AB1. Ubiquitinated, leading to its proteasomal degradation. Ubiquitinated by the SCF(FBXW7) complex when phosphorylated by CDK1 leading to its proteasomal degradation. Ubiquitinated by SIAH2; leading to its proteasomal degradation. Rapidly ubiquitinated in response to inflammatory triggers and sumoylation is a prerequisite to its ubiquitination. Post-translationally, sumoylated by UBE2I, desumoylated by SENP1, and sumoylation is a prerequisite to its ubiquitination. In terms of processing, phosphorylated by CSNK1E; phosphorylation enhances its cytoplasmic localization. Undergoes lysosome-mediated degradation in a time-dependent manner in the liver. In terms of tissue distribution, expressed in all tissues and cell lines examined. Expressed at high levels in some squamous carcinoma cell lines.

The protein localises to the nucleus. It is found in the cytoplasm. It localises to the cell projection. The protein resides in the dendrite. Its subcellular location is the dendritic spine. In terms of biological role, transcriptional repressor which coordinates circadian rhythm and metabolic pathways in a heme-dependent manner. Integral component of the complex transcription machinery that governs circadian rhythmicity and forms a critical negative limb of the circadian clock by directly repressing the expression of core clock components BMAL1, CLOCK and CRY1. Also regulates genes involved in metabolic functions, including lipid and bile acid metabolism, adipogenesis, gluconeogenesis and the macrophage inflammatory response. Acts as a receptor for heme which stimulates its interaction with the NCOR1/HDAC3 corepressor complex, enhancing transcriptional repression. Recognizes two classes of DNA response elements within the promoter of its target genes and can bind to DNA as either monomers or homodimers, depending on the nature of the response element. Binds as a monomer to a response element composed of the consensus half-site motif 5'-[A/G]GGTCA-3' preceded by an A/T-rich 5' sequence (RevRE), or as a homodimer to a direct repeat of the core motif spaced by two nucleotides (RevDR-2). Acts as a potent competitive repressor of ROR alpha (RORA) function and regulates the levels of its ligand heme by repressing the expression of PPARGC1A, a potent inducer of heme synthesis. Regulates lipid metabolism by repressing the expression of APOC3 and by influencing the activity of sterol response element binding proteins (SREBPs); represses INSIG2 which interferes with the proteolytic activation of SREBPs which in turn govern the rhythmic expression of enzymes with key functions in sterol and fatty acid synthesis. Regulates gluconeogenesis via repression of G6PC1 and PEPCK and adipocyte differentiation via repression of PPARG. Regulates glucagon release in pancreatic alpha-cells via the AMPK-NAMPT-SIRT1 pathway and the proliferation, glucose-induced insulin secretion and expression of key lipogenic genes in pancreatic-beta cells. Positively regulates bile acid synthesis by increasing hepatic expression of CYP7A1 via repression of NR0B2 and NFIL3 which are negative regulators of CYP7A1. Modulates skeletal muscle oxidative capacity by regulating mitochondrial biogenesis and autophagy; controls mitochondrial biogenesis and respiration by interfering with the STK11-PRKAA1/2-SIRT1-PPARGC1A signaling pathway. Represses the expression of SERPINE1/PAI1, an important modulator of cardiovascular disease and the expression of inflammatory cytokines and chemokines in macrophages. Represses gene expression at a distance in macrophages by inhibiting the transcription of enhancer-derived RNAs (eRNAs). Plays a role in the circadian regulation of body temperature and negatively regulates thermogenic transcriptional programs in brown adipose tissue (BAT); imposes a circadian oscillation in BAT activity, increasing body temperature when awake and depressing thermogenesis during sleep. In concert with NR2E3, regulates transcriptional networks critical for photoreceptor development and function. In addition to its activity as a repressor, can also act as a transcriptional activator. In the ovarian granulosa cells acts as a transcriptional activator of STAR which plays a role in steroid biosynthesis. In collaboration with SP1, activates GJA1 transcription in a heme-independent manner. Represses the transcription of CYP2B10, CYP4A10 and CYP4A14. Represses the transcription of CES2. Represses and regulates the circadian expression of TSHB in a NCOR1-dependent manner. Negatively regulates the protein stability of NR3C1 and influences the time-dependent subcellular distribution of NR3C1, thereby affecting its transcriptional regulatory activity. Plays a critical role in the circadian control of neutrophilic inflammation in the lung; under resting, non-stress conditions, acts as a rhythmic repressor to limit inflammatory activity whereas in the presence of inflammatory triggers undergoes ubiquitin-mediated degradation thereby relieving inhibition of the inflammatory response. Plays a key role in the circadian regulation of microglial activation and neuroinflammation; suppresses microglial activation through the NF-kappaB pathway in the central nervous system. Plays a role in the regulation of the diurnal rhythms of lipid and protein metabolism in the skeletal muscle via transcriptional repression of genes controlling lipid and amino acid metabolism in the muscle. This is Nuclear receptor subfamily 1 group D member 1 (NR1D1) from Bos taurus (Bovine).